Consider the following 217-residue polypeptide: Lipid A acyltransferase PagP (217 aa).

Residues methionine 1–alanine 24 form the signal peptide. Residues histidine 89, aspartate 132, and serine 133 contribute to the active site.

The protein belongs to the lipid A palmitoyltransferase family. As to quaternary structure, homodimer.

It is found in the cell outer membrane. It catalyses the reaction a lipid A + a 1,2-diacyl-sn-glycero-3-phosphocholine = a hepta-acyl lipid A + a 2-acyl-sn-glycero-3-phosphocholine. The enzyme catalyses a lipid IVA + a 1,2-diacyl-sn-glycero-3-phosphocholine = a lipid IVB + a 2-acyl-sn-glycero-3-phosphocholine. The catalysed reaction is a lipid IIA + a 1,2-diacyl-sn-glycero-3-phosphocholine = a lipid IIB + a 2-acyl-sn-glycero-3-phosphocholine. Transfers a fatty acid residue from the sn-1 position of a phospholipid to the N-linked hydroxyfatty acid chain on the proximal unit of lipid A or its precursors. The sequence is that of Lipid A acyltransferase PagP from Pectobacterium atrosepticum (strain SCRI 1043 / ATCC BAA-672) (Erwinia carotovora subsp. atroseptica).